The sequence spans 511 residues: Glucose-6-phosphate 1-dehydrogenase, cytoplasmic isoform (511 aa).

NADP(+)-binding positions include 36-43 (GASGDLAK), Arg-71, Tyr-151, and Lys-178. Residues Lys-178, 208 to 212 (HYLGK), Glu-246, and Asp-265 each bind D-glucose 6-phosphate. The active-site Proton acceptor is the His-270. Lys-353 is a binding site for NADP(+). Positions 356 and 361 each coordinate D-glucose 6-phosphate. Residues Lys-362, Arg-366, and Arg-390 each contribute to the NADP(+) site. D-glucose 6-phosphate is bound at residue Gln-392. NADP(+) is bound by residues 398–400 (YMK), 418–420 (DLS), Arg-484, and Trp-506.

It belongs to the glucose-6-phosphate dehydrogenase family. Homotetramer. In terms of tissue distribution, found in tubers, stolons, roots, and flower buds.

Its subcellular location is the cytoplasm. It catalyses the reaction D-glucose 6-phosphate + NADP(+) = 6-phospho-D-glucono-1,5-lactone + NADPH + H(+). It functions in the pathway carbohydrate degradation; pentose phosphate pathway; D-ribulose 5-phosphate from D-glucose 6-phosphate (oxidative stage): step 1/3. Regulated by metabolites. Its function is as follows. Catalyzes the rate-limiting step of the oxidative pentose-phosphate pathway, which represents a route for the dissimilation of carbohydrates besides glycolysis. The main function of this enzyme is to generate NADPH for reductive biosyntheses. In Solanum tuberosum (Potato), this protein is Glucose-6-phosphate 1-dehydrogenase, cytoplasmic isoform (G6PDH).